A 191-amino-acid polypeptide reads, in one-letter code: UPF0312 protein Sputw3181_1309 (191 aa).

The N-terminal stretch at 1–22 (MKKQLLSALIGVSLLVPMAASA) is a signal peptide.

It belongs to the UPF0312 family. Type 1 subfamily.

The protein resides in the periplasm. This is UPF0312 protein Sputw3181_1309 from Shewanella sp. (strain W3-18-1).